The chain runs to 73 residues: MKEHSFYQFALTVRGRKDSKGDLAEEIFNDLSFPKHEKDFNQLSDYIEMQSDISVPMSEFDDLYEEYIEWLKF.

Belongs to the UPF0346 family.

The protein is UPF0346 protein SH1485 of Staphylococcus haemolyticus (strain JCSC1435).